Here is a 260-residue protein sequence, read N- to C-terminus: Snake venom serine protease homolog 2A (260 aa).

The signal sequence occupies residues 1–18; sequence MVLIRVLANLLILQLSYA. A propeptide spanning residues 19-24 is cleaved from the precursor; sequence QKSSEL. Positions 25-251 constitute a Peptidase S1 domain; the sequence is IIGGDECNIN…HLDWIKSIIA (227 aa). Disulfide bonds link Cys-31–Cys-165, Cys-52–Cys-68, Cys-100–Cys-258, Cys-144–Cys-212, Cys-176–Cys-191, and Cys-202–Cys-227. Residues Asn-83, Asn-123, and Asn-124 are each glycosylated (N-linked (GlcNAc...) asparagine).

Belongs to the peptidase S1 family. Snake venom subfamily. Expressed by the venom gland.

It localises to the secreted. In terms of biological role, snake venom serine protease homolog that may act in the hemostasis system of the prey. In Craspedocephalus gramineus (Bamboo pit viper), this protein is Snake venom serine protease homolog 2A (TLG2A).